The chain runs to 294 residues: 4-hydroxy-tetrahydrodipicolinate synthase (294 aa).

T47 contributes to the pyruvate binding site. The active-site Proton donor/acceptor is the Y135. Catalysis depends on K163, which acts as the Schiff-base intermediate with substrate. Position 205 (T205) interacts with pyruvate.

The protein belongs to the DapA family. In terms of assembly, homotetramer; dimer of dimers.

The protein localises to the cytoplasm. The catalysed reaction is L-aspartate 4-semialdehyde + pyruvate = (2S,4S)-4-hydroxy-2,3,4,5-tetrahydrodipicolinate + H2O + H(+). Its pathway is amino-acid biosynthesis; L-lysine biosynthesis via DAP pathway; (S)-tetrahydrodipicolinate from L-aspartate: step 3/4. Catalyzes the condensation of (S)-aspartate-beta-semialdehyde [(S)-ASA] and pyruvate to 4-hydroxy-tetrahydrodipicolinate (HTPA). The sequence is that of 4-hydroxy-tetrahydrodipicolinate synthase from Rickettsia montanensis.